A 255-amino-acid chain; its full sequence is Glutamate racemase (255 aa).

Substrate contacts are provided by residues 7 to 8 (DS) and 39 to 40 (YG). Cys70 (proton donor/acceptor) is an active-site residue. Substrate is bound at residue 71-72 (NT). Cys181 (proton donor/acceptor) is an active-site residue. A substrate-binding site is contributed by 182 to 183 (TH).

The protein belongs to the aspartate/glutamate racemases family.

It carries out the reaction L-glutamate = D-glutamate. The protein operates within cell wall biogenesis; peptidoglycan biosynthesis. In terms of biological role, provides the (R)-glutamate required for cell wall biosynthesis. The sequence is that of Glutamate racemase from Helicobacter pylori (strain G27).